A 177-amino-acid chain; its full sequence is ATP-dependent protease subunit HslV (177 aa).

Thr-7 is an active-site residue. Residues Ala-162, Cys-165, and Thr-168 each contribute to the Na(+) site.

The protein belongs to the peptidase T1B family. HslV subfamily. In terms of assembly, a double ring-shaped homohexamer of HslV is capped on each side by a ring-shaped HslU homohexamer. The assembly of the HslU/HslV complex is dependent on binding of ATP.

The protein resides in the cytoplasm. The enzyme catalyses ATP-dependent cleavage of peptide bonds with broad specificity.. Its activity is regulated as follows. Allosterically activated by HslU binding. Functionally, protease subunit of a proteasome-like degradation complex believed to be a general protein degrading machinery. The polypeptide is ATP-dependent protease subunit HslV (Thioalkalivibrio sulfidiphilus (strain HL-EbGR7)).